Consider the following 157-residue polypeptide: Prefoldin subunit alpha (157 aa).

It belongs to the prefoldin subunit alpha family. Heterohexamer of two alpha and four beta subunits.

It is found in the cytoplasm. In terms of biological role, molecular chaperone capable of stabilizing a range of proteins. Seems to fulfill an ATP-independent, HSP70-like function in archaeal de novo protein folding. The polypeptide is Prefoldin subunit alpha (Methanopyrus kandleri (strain AV19 / DSM 6324 / JCM 9639 / NBRC 100938)).